The following is a 403-amino-acid chain: Arginine biosynthesis bifunctional protein ArgJ (403 aa).

Substrate-binding residues include T149, K175, T186, E272, N398, and T403. The Nucleophile role is filled by T186.

This sequence belongs to the ArgJ family. Heterotetramer of two alpha and two beta chains.

The protein localises to the cytoplasm. It carries out the reaction N(2)-acetyl-L-ornithine + L-glutamate = N-acetyl-L-glutamate + L-ornithine. The enzyme catalyses L-glutamate + acetyl-CoA = N-acetyl-L-glutamate + CoA + H(+). It functions in the pathway amino-acid biosynthesis; L-arginine biosynthesis; L-ornithine and N-acetyl-L-glutamate from L-glutamate and N(2)-acetyl-L-ornithine (cyclic): step 1/1. Its pathway is amino-acid biosynthesis; L-arginine biosynthesis; N(2)-acetyl-L-ornithine from L-glutamate: step 1/4. Functionally, catalyzes two activities which are involved in the cyclic version of arginine biosynthesis: the synthesis of N-acetylglutamate from glutamate and acetyl-CoA as the acetyl donor, and of ornithine by transacetylation between N(2)-acetylornithine and glutamate. This chain is Arginine biosynthesis bifunctional protein ArgJ, found in Caldanaerobacter subterraneus subsp. tengcongensis (strain DSM 15242 / JCM 11007 / NBRC 100824 / MB4) (Thermoanaerobacter tengcongensis).